Consider the following 246-residue polypeptide: Acetoacetyl-CoA reductase (246 aa).

NADP(+)-binding positions include 13-15 (GGI), glycine 35, arginine 40, 60-62 (GNV), and 88-92 (NAGIT). Substrate-binding positions include aspartate 94 and 147–150 (QFGQ). The active-site Proton acceptor is tyrosine 153. 183 to 186 (PGYI) contacts NADP(+). Substrate contacts are provided by residues 184–185 (GY) and arginine 195.

Belongs to the short-chain dehydrogenases/reductases (SDR) family. Homotetramer.

The protein resides in the cytoplasm. It carries out the reaction a (3R)-3-hydroxyacyl-CoA + NADP(+) = a 3-oxoacyl-CoA + NADPH + H(+). The enzyme catalyses (3R)-3-hydroxybutanoyl-CoA + NADP(+) = acetoacetyl-CoA + NADPH + H(+). Its pathway is biopolymer metabolism; poly-(R)-3-hydroxybutanoate biosynthesis. Catalyzes the chiral reduction of acetoacetyl-CoA to (R)-3-hydroxybutyryl-CoA. Is involved in the biosynthesis of polyhydroxybutyrate (PHB), which is accumulated as an intracellular energy reserve material when cells grow under conditions of nutrient limitation. The sequence is that of Acetoacetyl-CoA reductase from Cupriavidus necator (strain ATCC 17699 / DSM 428 / KCTC 22496 / NCIMB 10442 / H16 / Stanier 337) (Ralstonia eutropha).